A 264-amino-acid polypeptide reads, in one-letter code: Proteasome assembly chaperone 2 (264 aa).

The residue at position 137 (Thr137) is a Phosphothreonine.

This sequence belongs to the PSMG2 family. In terms of assembly, forms a heterodimer with PSMG1. The PSMG1-PSMG2 heterodimer interacts directly with the PSMA5 and PSMA7 proteasome alpha subunits. In terms of processing, degraded by the proteasome upon completion of 20S proteasome maturation.

It localises to the nucleus. Chaperone protein which promotes assembly of the 20S proteasome as part of a heterodimer with PSMG1. The PSMG1-PSMG2 heterodimer binds to the PSMA5 and PSMA7 proteasome subunits, promotes assembly of the proteasome alpha subunits into the heteroheptameric alpha ring and prevents alpha ring dimerization. The polypeptide is Proteasome assembly chaperone 2 (Mus musculus (Mouse)).